We begin with the raw amino-acid sequence, 308 residues long: Phenylcoumaran benzylic ether reductase TP7 (308 aa).

NADP(+) contacts are provided by residues 11–17 (GGTGYIG), R36, and K45. The active-site Proton acceptor is the K133. R137 is a binding site for NADP(+).

It belongs to the NmrA-type oxidoreductase family. Isoflavone reductase subfamily. In terms of tissue distribution, expressed in flowers. Expressed at low levels in stems.

The catalysed reaction is (-)-dehydrodiconiferyl alcohol + NADPH + H(+) = (S)-isodihydrodehydrodiconiferyl alcohol + NADP(+). It carries out the reaction (+)-dehydrodiconiferyl alcohol + NADPH + H(+) = (R)-isodihydrodehydrodiconiferyl alcohol + NADP(+). The enzyme catalyses (2R,3S)-dihydrodehydrodiconiferyl alcohol + NADPH + H(+) = (S)-tetrahydrodehydrodiconiferyl alcohol + NADP(+). It catalyses the reaction (2S,3R)-dihydrodehydrodiconiferyl alcohol + NADPH + H(+) = (R)-tetrahydrodehydrodiconiferyl alcohol + NADP(+). Functionally, oxidoreductase involved in lignan biosynthesis. Catalyzes the NADPH-dependent reduction of phenylcoumaran benzylic ethers. Converts dehydrodiconiferyl alcohol (DDC) to isodihydrodehydrodiconiferyl alcohol (IDDDC), and dihydrodehydrodiconiferyl alcohol (DDDC) to tetrahydrodehydrodiconiferyl alcohol (TDDC). This chain is Phenylcoumaran benzylic ether reductase TP7, found in Nicotiana tabacum (Common tobacco).